We begin with the raw amino-acid sequence, 255 residues long: Hydroxyacylglutathione hydrolase (255 aa).

Positions 56, 58, 60, 61, 114, 133, and 171 each coordinate Zn(2+).

It belongs to the metallo-beta-lactamase superfamily. Glyoxalase II family. In terms of assembly, monomer. Requires Zn(2+) as cofactor.

It carries out the reaction an S-(2-hydroxyacyl)glutathione + H2O = a 2-hydroxy carboxylate + glutathione + H(+). The protein operates within secondary metabolite metabolism; methylglyoxal degradation; (R)-lactate from methylglyoxal: step 2/2. Functionally, thiolesterase that catalyzes the hydrolysis of S-D-lactoyl-glutathione to form glutathione and D-lactic acid. In Nitrobacter hamburgensis (strain DSM 10229 / NCIMB 13809 / X14), this protein is Hydroxyacylglutathione hydrolase.